The following is a 91-amino-acid chain: Small ribosomal subunit protein bS18 (91 aa).

Residues 1-21 (MSDERAPQRSTGPRKKRPFQR) are disordered. Residues 12–21 (GPRKKRPFQR) are compositionally biased toward basic residues.

The protein belongs to the bacterial ribosomal protein bS18 family. As to quaternary structure, part of the 30S ribosomal subunit. Forms a tight heterodimer with protein bS6.

Functionally, binds as a heterodimer with protein bS6 to the central domain of the 16S rRNA, where it helps stabilize the platform of the 30S subunit. The protein is Small ribosomal subunit protein bS18 of Geotalea daltonii (strain DSM 22248 / JCM 15807 / FRC-32) (Geobacter daltonii).